Consider the following 519-residue polypeptide: Ribonuclease Y (519 aa).

A helical transmembrane segment spans residues 3 to 23; that stretch reads LMIFAYIAIGAVLGAGTGYLL. One can recognise a KH domain in the interval 209–272; the sequence is TVTAVTLPSE…QVAKMALERL (64 aa). The region spanning 335-428 is the HD domain; the sequence is VLQHSLEVSA…VQAADSISGA (94 aa).

This sequence belongs to the RNase Y family.

The protein localises to the cell membrane. Functionally, endoribonuclease that initiates mRNA decay. The chain is Ribonuclease Y from Nitratidesulfovibrio vulgaris (strain ATCC 29579 / DSM 644 / CCUG 34227 / NCIMB 8303 / VKM B-1760 / Hildenborough) (Desulfovibrio vulgaris).